A 20-amino-acid chain; its full sequence is Flagellar filament 33 kDa core protein (20 aa).

It belongs to the bacterial flagellin family. In terms of assembly, the flagellum consists of an outer layer composed of repeating units of FlaA around a core that contains one or all of five antigenically related polypeptides.

It is found in the periplasmic flagellum. Its subcellular location is the periplasm. In terms of biological role, component of the core of the flagella. This Spirochaeta aurantia protein is Flagellar filament 33 kDa core protein.